A 232-amino-acid polypeptide reads, in one-letter code: Large ribosomal subunit protein uL1 (232 aa).

This sequence belongs to the universal ribosomal protein uL1 family. Part of the 50S ribosomal subunit.

Functionally, binds directly to 23S rRNA. The L1 stalk is quite mobile in the ribosome, and is involved in E site tRNA release. Protein L1 is also a translational repressor protein, it controls the translation of the L11 operon by binding to its mRNA. The sequence is that of Large ribosomal subunit protein uL1 from Sinorhizobium medicae (strain WSM419) (Ensifer medicae).